The following is a 250-amino-acid chain: Transmembrane protein 106C (250 aa).

The interval 1 to 25 (MGSQHSAAARPSSCRRKQEDDRDGL) is disordered. Gly-2 is lipidated: N-myristoyl glycine. Basic and acidic residues predominate over residues 16–25 (RKQEDDRDGL). A helical membrane pass occupies residues 87–107 (YVLLSILLCLLASGLVVFFLF). Asn-173 and Asn-186 each carry an N-linked (GlcNAc...) asparagine glycan. Residues 197–217 (FSYVYFFCTVPEILVHNIVIF) traverse the membrane as a helical segment.

This sequence belongs to the TMEM106 family. In terms of assembly, interacts with TMEM106B.

It localises to the endoplasmic reticulum membrane. The protein resides in the membrane. The polypeptide is Transmembrane protein 106C (TMEM106C) (Homo sapiens (Human)).